Here is a 95-residue protein sequence, read N- to C-terminus: Aspartyl/glutamyl-tRNA(Asn/Gln) amidotransferase subunit C (95 aa).

This sequence belongs to the GatC family. Heterotrimer of A, B and C subunits.

The enzyme catalyses L-glutamyl-tRNA(Gln) + L-glutamine + ATP + H2O = L-glutaminyl-tRNA(Gln) + L-glutamate + ADP + phosphate + H(+). It carries out the reaction L-aspartyl-tRNA(Asn) + L-glutamine + ATP + H2O = L-asparaginyl-tRNA(Asn) + L-glutamate + ADP + phosphate + 2 H(+). In terms of biological role, allows the formation of correctly charged Asn-tRNA(Asn) or Gln-tRNA(Gln) through the transamidation of misacylated Asp-tRNA(Asn) or Glu-tRNA(Gln) in organisms which lack either or both of asparaginyl-tRNA or glutaminyl-tRNA synthetases. The reaction takes place in the presence of glutamine and ATP through an activated phospho-Asp-tRNA(Asn) or phospho-Glu-tRNA(Gln). The polypeptide is Aspartyl/glutamyl-tRNA(Asn/Gln) amidotransferase subunit C (Acidiphilium cryptum (strain JF-5)).